The following is a 210-amino-acid chain: Urease accessory protein UreF (210 aa).

Belongs to the UreF family. As to quaternary structure, ureD, UreF and UreG form a complex that acts as a GTP-hydrolysis-dependent molecular chaperone, activating the urease apoprotein by helping to assemble the nickel containing metallocenter of UreC. The UreE protein probably delivers the nickel.

It is found in the cytoplasm. Functionally, required for maturation of urease via the functional incorporation of the urease nickel metallocenter. The polypeptide is Urease accessory protein UreF (Cereibacter sphaeroides (strain KD131 / KCTC 12085) (Rhodobacter sphaeroides)).